Consider the following 737-residue polypeptide: Methylcrotonoyl-CoA carboxylase subunit alpha, mitochondrial (737 aa).

The transit peptide at 1 to 33 (MASRLLLLPRRRSRHGGASLLLARLLSSSSSEA) directs the protein to the mitochondrion. The Biotin carboxylation domain occupies 38-485 (AVEKVLVANR…DTHFIERYQN (448 aa)). Residues Lys-153, 185–246 (ANKI…PRHI), Glu-237, and His-272 contribute to the ATP site. The region spanning 157 to 355 (KRIMGAAGVP…LVEWQIRIAN (199 aa)) is the ATP-grasp domain. Glu-312, Glu-326, and Asn-328 together coordinate Mn(2+). The active site involves Arg-330. The interval 636–665 (YRQTLRAEQSPDDSSQPSASSEARSHPKGS) is disordered. Residues 647-657 (DDSSQPSASSE) show a composition bias toward low complexity. A Biotinyl-binding domain is found at 656–732 (SEARSHPKGS…FDSSVLFTVK (77 aa)). Lys-698 carries the N6-biotinyllysine modification.

As to quaternary structure, probably a heterodimer composed of biotin-containing alpha subunits and beta subunits. It depends on biotin as a cofactor. Mn(2+) serves as cofactor.

The protein localises to the mitochondrion matrix. It carries out the reaction 3-methylbut-2-enoyl-CoA + hydrogencarbonate + ATP = 3-methyl-(2E)-glutaconyl-CoA + ADP + phosphate + H(+). It participates in amino-acid degradation; L-leucine degradation; (S)-3-hydroxy-3-methylglutaryl-CoA from 3-isovaleryl-CoA: step 2/3. Functionally, biotin-attachment subunit of the 3-methylcrotonyl-CoA carboxylase, an enzyme that catalyzes the conversion of 3-methylcrotonyl-CoA to 3-methylglutaconyl-CoA, a critical step for leucine and isovaleric acid catabolism. This Oryza sativa subsp. japonica (Rice) protein is Methylcrotonoyl-CoA carboxylase subunit alpha, mitochondrial (MCCA).